The following is a 354-amino-acid chain: MIDWITSQGHDIFGMYWTPLWILIRAVLIVVPVLLCVAYLILWERKLIGWMHVRIGPNRVGPLGLLQPIADVLKLLLKEVMFPSQINRGMYLVAPLMVLMPAVAVWAVIPFQAEVVMADINAGLLYVMAISSVGVYGVILAGWASNSKYAFIGAMRAAAQMVSYEIAMGFALVTVLMVSGSLNLSHIVNAQNTGYFANMGLNLLSWNWLPLLPMFGVYFISGVAETNRHPFDVVEGESEIVAGHMIEYSGMTFALFFLAEYINMIIISTMTSLMFLGGWAPPFSSALTNAIPGFFWLVIKVFLLLSVFIWIRASFPRYRYDQIMRLGWKIFIPLTVAWLIIVAIWIKSPWNIWH.

A run of 8 helical transmembrane segments spans residues 22-42, 91-111, 124-144, 162-182, 203-223, 250-270, 291-311, and 326-346; these read ILIR…YLIL, YLVA…VIPF, LLYV…AGWA, VSYE…SGSL, LLSW…ISGV, GMTF…ISTM, IPGF…FIWI, and LGWK…AIWI.

Belongs to the complex I subunit 1 family. As to quaternary structure, NDH-1 is composed of 14 different subunits. Subunits NuoA, H, J, K, L, M, N constitute the membrane sector of the complex.

Its subcellular location is the cell inner membrane. The enzyme catalyses a quinone + NADH + 5 H(+)(in) = a quinol + NAD(+) + 4 H(+)(out). Its function is as follows. NDH-1 shuttles electrons from NADH, via FMN and iron-sulfur (Fe-S) centers, to quinones in the respiratory chain. The immediate electron acceptor for the enzyme in this species is believed to be ubiquinone. Couples the redox reaction to proton translocation (for every two electrons transferred, four hydrogen ions are translocated across the cytoplasmic membrane), and thus conserves the redox energy in a proton gradient. This subunit may bind ubiquinone. In Cupriavidus metallidurans (strain ATCC 43123 / DSM 2839 / NBRC 102507 / CH34) (Ralstonia metallidurans), this protein is NADH-quinone oxidoreductase subunit H.